The primary structure comprises 298 residues: MDYLDKLTHLAQVRGEINIRCEFQGEWQISHQEKDAGKGIFHLIEQGECWLTLNEKQFHLKEGDVFFLPQNQPHSMHYSANKRADIPTKKSHQGLFELHQIGRGTPDLKMFCGNFYYQQDALLTASMPEYLHINLCDTPIHPLVQLFLQEAQKNDAGTKSVVDALSNVLLIYILRHAIQQNLIEQGILFALQDKRLNTALIAILQQPQNDWHIEQLAELATMSRANFIRIFQQHIGMSPGRFLTKVRLQSAAFLLKQSQQSVLAIALEVGYQSEAHFCKVFKNYYQLSPSQYRKSVSL.

An HTH araC/xylS-type domain is found at 194–295; that stretch reads KRLNTALIAI…QLSPSQYRKS (102 aa). DNA-binding regions (H-T-H motif) lie at residues 214-235 and 262-285; these read EQLA…QQHI and VLAI…KNYY.

This is an uncharacterized protein from Haemophilus influenzae (strain ATCC 51907 / DSM 11121 / KW20 / Rd).